The sequence spans 254 residues: U3 small nucleolar RNA-associated protein NOL7 (254 aa).

Residues 1–90 (MVQLRPRLSR…ASARRDKTLL (90 aa)) are disordered. 2 stretches are compositionally biased toward acidic residues: residues 18–31 (MVDE…EEEA) and 48–61 (PLDE…EAPE). Basic and acidic residues predominate over residues 71–90 (EAREEELRVRASARRDKTLL). A Glycyl lysine isopeptide (Lys-Gly) (interchain with G-Cter in SUMO2) cross-link involves residue K127. At S129 the chain carries Phosphoserine. K157 is covalently cross-linked (Glycyl lysine isopeptide (Lys-Gly) (interchain with G-Cter in SUMO2)). The tract at residues 235–254 (NAKRFKKRWMAKKMKKKTYK) is disordered.

This sequence belongs to the UTP16 family. As to quaternary structure, part of the small subunit (SSU) processome, composed of more than 70 proteins and the RNA chaperone small nucleolar RNA (snoRNA) U3.

It localises to the nucleus. It is found in the nucleolus. Its function is as follows. Functions as part of the small subunit (SSU) processome, first precursor of the small eukaryotic ribosomal subunit that coordinates the first two steps of ribosome biogenesis in transcription of the primary transcript pre-RNA and pre-18S processing. During the assembly of the SSU processome in the nucleolus, many ribosome biogenesis factors, an RNA chaperone and ribosomal proteins associate with the nascent pre-rRNA and work in concert to generate RNA folding, modifications, rearrangements and cleavage as well as targeted degradation of pre-ribosomal RNA by the RNA exosome. This subunit is required for processing of the 5'-external transcribed spacer sequence (5'ETS) of the primary transcript pre-rRNA to yield the 18S rRNA. Also plays a role in maintaining early pre-rRNA levels, either by assisting in its transcription or stability. The protein is U3 small nucleolar RNA-associated protein NOL7 (Nol7) of Mus musculus (Mouse).